A 149-amino-acid chain; its full sequence is Flagellar assembly factor FliW (149 aa).

This sequence belongs to the FliW family. As to quaternary structure, interacts with translational regulator CsrA and flagellin(s).

Its subcellular location is the cytoplasm. Functionally, acts as an anti-CsrA protein, binds CsrA and prevents it from repressing translation of its target genes, one of which is flagellin. Binds to flagellin and participates in the assembly of the flagellum. The polypeptide is Flagellar assembly factor FliW (Thermotoga maritima (strain ATCC 43589 / DSM 3109 / JCM 10099 / NBRC 100826 / MSB8)).